We begin with the raw amino-acid sequence, 437 residues long: Major royal jelly protein 6 (437 aa).

Residues 1–20 form the signal peptide; sequence MTNWLLLIVCLSIACQDVTS. N-linked (GlcNAc...) asparagine glycosylation is found at asparagine 78, asparagine 164, asparagine 181, asparagine 201, and asparagine 324.

The protein belongs to the major royal jelly protein family. As to expression, found in and secreted from the hypopharyngeal glands of the worker honey bee (at protein level); expression peaks at 20 days post eclosion. Expressed in the spermatheca of adult queen bees (at protein level); Expression levels are higher in mated queens than in virgin queens. Expressed at low level in the brains of adult worker bees. Protein abundance does not seem to correlate with transcript abundance.

It localises to the secreted. Functionally, component of royal jelly, a substance produced in the hypopharyngeal gland containing proteins, free amino acids, fatty acids, sugars and other nutrients, which is fed to developing larvae by worker nurse bees. All larvae are fed some royal jelly (also known as worker jelly) early in their development but it forms the principal source of nutrition for larvae destined to become queen bees. Produced in the spermatheca of adult queen bees, along with other major royal jelly proteins, where it may act as a nutrient supply for sperm stored by mated queens, or be involved in energy metabolism. This is Major royal jelly protein 6 from Apis mellifera (Honeybee).